Consider the following 158-residue polypeptide: MKSKNSRLDAIKIIISSKEVGSQEELLQELAKEGFRLTQATLSRDLKQLKVAKAASMNGNYVYVLPNNTMYKRMTEQHSASEMLMHNGFISIEFSANLAVIKTRPGYASSLAYDIDNRNFDEILGTIAGDDTIMLVIREGCTRAGVKNALSLIIPNIQ.

The protein belongs to the ArgR family.

It localises to the cytoplasm. The protein operates within amino-acid biosynthesis; L-arginine biosynthesis [regulation]. In terms of biological role, regulates arginine biosynthesis genes. This is Arginine repressor from Phocaeicola vulgatus (strain ATCC 8482 / DSM 1447 / JCM 5826 / CCUG 4940 / NBRC 14291 / NCTC 11154) (Bacteroides vulgatus).